The following is an 89-amino-acid chain: MKTLLLILGVVAFVYLEPGYTTNCFTCTTWTLSCREFEKCPPDKGTCFKRWNSTGIAIRRRYTRGCAAACPNPVGNEKVFCCVTDNCNK.

A signal peptide spans 1 to 16; that stretch reads MKTLLLILGVVAFVYL. 4 cysteine pairs are disulfide-bonded: C24–C47, C40–C66, C70–C81, and C82–C87.

Belongs to the three-finger toxin family. Ancestral subfamily. In terms of tissue distribution, expressed by the venom gland.

It localises to the secreted. The sequence is that of Three-finger toxin 3 from Sistrurus catenatus edwardsii (Desert massasauga).